The following is an 876-amino-acid chain: Inter-alpha-trypsin inhibitor heavy chain H3 (876 aa).

The signal sequence occupies residues 1–18 (MVALSHLGSALQLGSLWG). A propeptide spanning residues 19 to 31 (FPRSPFRLLGKRS) is cleaved from the precursor. Residues 26–155 (LLGKRSLPEG…KVTFELTYEE (130 aa)) enclose the VIT domain. Asparagine 88 carries N-linked (GlcNAc...) asparagine glycosylation. One can recognise a VWFA domain in the interval 281-464 (NVAFVIDISG…LQLQGFYEEV (184 aa)). Asparagine 577 carries an N-linked (GlcNAc...) asparagine glycan. Position 637 is an aspartate 1-(chondroitin 4-sulfate)-ester (aspartate 637). Residues 638-876 (PHFIIQVPEK…HTDYIVPNLF (239 aa)) constitute a propeptide that is removed on maturation.

The protein belongs to the ITIH family. As to quaternary structure, I-alpha-I plasma protease inhibitors are assembled from one or two heavy chains (HC) and one light chain, bikunin. Pre-alpha-inhibitor (P-alpha-I) is composed of ITIH3/HC3 and bikunin. Post-translationally, heavy chains are linked to bikunin via chondroitin 4-sulfate esterified to the alpha-carboxyl of the C-terminal aspartate after propeptide cleavage.

It is found in the secreted. May act as a carrier of hyaluronan in serum or as a binding protein between hyaluronan and other matrix protein, including those on cell surfaces in tissues to regulate the localization, synthesis and degradation of hyaluronan which are essential to cells undergoing biological processes. In Pongo abelii (Sumatran orangutan), this protein is Inter-alpha-trypsin inhibitor heavy chain H3 (ITIH3).